The primary structure comprises 127 residues: Aspartate 1-decarboxylase (127 aa).

Serine 25 serves as the catalytic Schiff-base intermediate with substrate; via pyruvic acid. The residue at position 25 (serine 25) is a Pyruvic acid (Ser). Threonine 57 contributes to the substrate binding site. The active-site Proton donor is tyrosine 58. Position 73–75 (73–75 (GAA)) interacts with substrate.

The protein belongs to the PanD family. Heterooctamer of four alpha and four beta subunits. Pyruvate is required as a cofactor. Is synthesized initially as an inactive proenzyme, which is activated by self-cleavage at a specific serine bond to produce a beta-subunit with a hydroxyl group at its C-terminus and an alpha-subunit with a pyruvoyl group at its N-terminus.

The protein localises to the cytoplasm. It catalyses the reaction L-aspartate + H(+) = beta-alanine + CO2. It participates in cofactor biosynthesis; (R)-pantothenate biosynthesis; beta-alanine from L-aspartate: step 1/1. Catalyzes the pyruvoyl-dependent decarboxylation of aspartate to produce beta-alanine. The protein is Aspartate 1-decarboxylase of Bacillus cereus (strain G9842).